Here is a 112-residue protein sequence, read N- to C-terminus: Tetracenomycin-F1 monooxygenase (112 aa).

The ABM domain occupies 11–100 (FTLVNVFGVA…SRPKPIFCEV (90 aa)).

As to quaternary structure, homotrimer.

The catalysed reaction is tetracenomycin F1 + O2 = tetracenomycin D3 + H2O + H(+). It participates in antibiotic biosynthesis; tetracenomycin C biosynthesis. With respect to regulation, inhibited by p-chloromercuribenzoic acid, N-ethylmaleimide and diethyl pyrocarbonate. Functionally, oxygenase required for conversion of tetracenomycin F1 to tetracenomycin D3. This is Tetracenomycin-F1 monooxygenase (tcmH) from Streptomyces glaucescens.